Reading from the N-terminus, the 400-residue chain is S-adenosylmethionine synthase (400 aa).

ATP is bound at residue 136-141; the sequence is GTGSTD.

The protein belongs to the AdoMet synthase 2 family. The cofactor is Mg(2+).

It catalyses the reaction L-methionine + ATP + H2O = S-adenosyl-L-methionine + phosphate + diphosphate. It participates in amino-acid biosynthesis; S-adenosyl-L-methionine biosynthesis; S-adenosyl-L-methionine from L-methionine: step 1/1. Its function is as follows. Catalyzes the formation of S-adenosylmethionine from methionine and ATP. This is S-adenosylmethionine synthase from Methanoregula boonei (strain DSM 21154 / JCM 14090 / 6A8).